Consider the following 546-residue polypeptide: 2-isopropylmalate synthase (546 aa).

One can recognise a Pyruvate carboxyltransferase domain in the interval 8–271 (ILIFDTTLRD…NKFFNRNSDS (264 aa)). Residues D17, H208, H210, and N244 each coordinate Mn(2+). The regulatory domain stretch occupies residues 408-546 (QLSLVQVSCG…DKTLLSNPGK (139 aa)).

Belongs to the alpha-IPM synthase/homocitrate synthase family. LeuA type 1 subfamily. As to quaternary structure, homodimer. Mn(2+) is required as a cofactor.

It localises to the cytoplasm. The catalysed reaction is 3-methyl-2-oxobutanoate + acetyl-CoA + H2O = (2S)-2-isopropylmalate + CoA + H(+). Its pathway is amino-acid biosynthesis; L-leucine biosynthesis; L-leucine from 3-methyl-2-oxobutanoate: step 1/4. Catalyzes the condensation of the acetyl group of acetyl-CoA with 3-methyl-2-oxobutanoate (2-ketoisovalerate) to form 3-carboxy-3-hydroxy-4-methylpentanoate (2-isopropylmalate). This Prochlorococcus marinus (strain MIT 9215) protein is 2-isopropylmalate synthase.